The primary structure comprises 292 residues: Probable ABC transporter permease protein YurN (292 aa).

The next 6 helical transmembrane spans lie at 7–27 (IIPYLFLVPALVFLLFVYIPI), 70–90 (VLYAVISIVCQVFGGLILAAV), 106–126 (VFFLPVVISMTVIALLFDFIY), 160–180 (VIFVSQWQSVGYIAMLYIVSI), 215–235 (FVAVVMTLTGAFTVFNEPYIL), and 260–280 (MMGYASAIATVVLIITLALSL). An ABC transmembrane type-1 domain is found at 66–282 (LTNNVLYAVI…IITLALSLMQ (217 aa)).

Belongs to the binding-protein-dependent transport system permease family. MalFG subfamily.

Its subcellular location is the cell membrane. Its function is as follows. Probably part of the binding-protein-dependent transport system YurMNO. Probably responsible for the translocation of the substrate across the membrane. The chain is Probable ABC transporter permease protein YurN (yurN) from Bacillus subtilis (strain 168).